Consider the following 171-residue polypeptide: Small ribosomal subunit protein uS5 (171 aa).

In terms of domain architecture, S5 DRBM spans 15–78 (LKDRLVAINR…EAAKKNLTRV (64 aa)).

It belongs to the universal ribosomal protein uS5 family. Part of the 30S ribosomal subunit. Contacts proteins S4 and S8.

With S4 and S12 plays an important role in translational accuracy. Its function is as follows. Located at the back of the 30S subunit body where it stabilizes the conformation of the head with respect to the body. This is Small ribosomal subunit protein uS5 from Phocaeicola vulgatus (strain ATCC 8482 / DSM 1447 / JCM 5826 / CCUG 4940 / NBRC 14291 / NCTC 11154) (Bacteroides vulgatus).